The chain runs to 305 residues: MEPLDLTCDLTSLNGKSAFITGGASGLGLATARKWAEAGVYITIADIQPPTSPVQPGLAHCFHYVYCDVTSWESQVAAFKSALRFSPSGALDIVACFAGTALAPGNQIDHVLAAGVPSLEVDPPRPSSSVRNIEVNLVGSYFTSWLGLYYLRIPGTGTDPELPSNKCLLFCASIAAYMDSPKASTYPASKFGVRGLFRSTRSQTKQLGVRCNLLAPWFFDSPLIAPIKHAMAARGVDMAKVLTFTSIDACVDAATYCVASPEIHGRALAVQPEGTFDLKDDLEDGWGGNQLRPIMQRRRDAGFDV.

Residues serine 25, leucine 27, glutamine 48, aspartate 68, tyrosine 186, lysine 190, and serine 221 each coordinate NADP(+). Tyrosine 186 serves as the catalytic Proton acceptor. The active-site Lowers pKa of active site Tyr is lysine 190.

This sequence belongs to the short-chain dehydrogenases/reductases (SDR) family.

It catalyses the reaction (1'S,5'S)-5'-hydroxyaverantin + NAD(+) = (S)-5'-oxoaverantin + NADH + H(+). The catalysed reaction is (1'S,5'R)-5'-hydroxyaverantin + NAD(+) = (S)-5'-oxoaverantin + NADH + 2 H(+). It participates in mycotoxin biosynthesis; sterigmatocystin biosynthesis. Functionally, 5'-hydroxyaverantin dehydrogenase; part of the gene cluster that mediates the biosynthesis of sterigmatocystin (ST), a polyketide-derived furanocoumarin which is part of the most toxic and carcinogenic compounds among the known mycotoxins. The first step in the biosynthesis of sterigmatocystin is the production of hexanoate by the fatty acid synthase (FAS) units stcJ and stcK. The polyketide backbone is assembled by the non-reducing polyketide synthase stcA by condensation of the starter hexanoyl-CoA and 7 malonyl-CoA extender units followed by cyclization and release of norsolorinic acid. Norsolorinic acid is the first stable intermediate in the biosynthesis of sterigmatocystin and is converted into averantin (AVN) by the ketoreductase stcE which reduces the hexanoate ketone to an alcohol. Averantin is then oxidized into 5'-hydroxyaverantin (HAVN) by the cytochrome P450 monooxygenase stcF. 5'-hydroxyaverantin is further converted to 5'-oxyaverantin (OAVN) by the 5'-hydroxyaverantin dehydrogenase stcG. The next step is the conversion of OAVN into averufin (AVF) which is catalyzed by a yet to be identified enzyme. The cytochrome P450 monooxygenase stcB and the flavin-binding monooxygenase stcW are both required for the conversion of averufin to 1-hydroxyversicolorone. The esterase stcI probably catalyzes the formation of versiconal hemiacetal acetate from 1-hydroxyversicolorone. The oxydoreductase stcN then probably catalyzes the biosynthetic step from versiconal to versicolorin B (VERB). The next step is performed by the versicolorin B desaturase stcL to produce versicolorin A (VERA). The ketoreductase stcU and the cytochrome P450 monooxygenase stcS are involved in the conversion of versicolorin A to demethylsterigmatocystin. The Baeyer-Villiger oxidas stcQ and the reductase stcR might be involved in the biosynthetic step from versicolorin A to demethylsterigmatocystin. The final step in the biosynthesis of sterigmatocystin is the methylation of demethylsterigmatocystin catalyzed by the methyltransferase stcP. In Emericella nidulans (strain FGSC A4 / ATCC 38163 / CBS 112.46 / NRRL 194 / M139) (Aspergillus nidulans), this protein is 5'-hydroxyaverantin dehydrogenase stcG.